The following is a 182-amino-acid chain: Sec-independent protein translocase protein TatB (182 aa).

Residues 1 to 21 traverse the membrane as a helical segment; sequence MFDIGFSELLLVFVIGLIVLG. Disordered stretches follow at residues 87-107 and 121-182; these read QAAESMKRTYSANDPEQASDE and TQHE…SDKP. Low complexity predominate over residues 168–182; that stretch reads AAPVVESSPSSSDKP.

It belongs to the TatB family. In terms of assembly, the Tat system comprises two distinct complexes: a TatABC complex, containing multiple copies of TatA, TatB and TatC subunits, and a separate TatA complex, containing only TatA subunits. Substrates initially bind to the TatABC complex, which probably triggers association of the separate TatA complex to form the active translocon.

It localises to the cell inner membrane. In terms of biological role, part of the twin-arginine translocation (Tat) system that transports large folded proteins containing a characteristic twin-arginine motif in their signal peptide across membranes. Together with TatC, TatB is part of a receptor directly interacting with Tat signal peptides. TatB may form an oligomeric binding site that transiently accommodates folded Tat precursor proteins before their translocation. This Salmonella choleraesuis (strain SC-B67) protein is Sec-independent protein translocase protein TatB.